Reading from the N-terminus, the 152-residue chain is SsrA-binding protein (152 aa).

Residues 124 to 152 (KKLHDKRDTAAERDWQRDKARLMKGDRGD) form a disordered region. The segment covering 128-152 (DKRDTAAERDWQRDKARLMKGDRGD) has biased composition (basic and acidic residues).

It belongs to the SmpB family.

It is found in the cytoplasm. Its function is as follows. Required for rescue of stalled ribosomes mediated by trans-translation. Binds to transfer-messenger RNA (tmRNA), required for stable association of tmRNA with ribosomes. tmRNA and SmpB together mimic tRNA shape, replacing the anticodon stem-loop with SmpB. tmRNA is encoded by the ssrA gene; the 2 termini fold to resemble tRNA(Ala) and it encodes a 'tag peptide', a short internal open reading frame. During trans-translation Ala-aminoacylated tmRNA acts like a tRNA, entering the A-site of stalled ribosomes, displacing the stalled mRNA. The ribosome then switches to translate the ORF on the tmRNA; the nascent peptide is terminated with the 'tag peptide' encoded by the tmRNA and targeted for degradation. The ribosome is freed to recommence translation, which seems to be the essential function of trans-translation. This is SsrA-binding protein from Caulobacter vibrioides (strain ATCC 19089 / CIP 103742 / CB 15) (Caulobacter crescentus).